Consider the following 449-residue polypeptide: Signal recognition particle protein (449 aa).

GTP contacts are provided by residues 109 to 116 (GLQGGGKT), 191 to 195 (DTAGR), and 249 to 252 (SRID).

The protein belongs to the GTP-binding SRP family. SRP54 subfamily. Part of the signal recognition particle protein translocation system, which is composed of SRP and FtsY. SRP is a ribonucleoprotein composed of Ffh and a 4.5S RNA molecule.

It localises to the cytoplasm. It carries out the reaction GTP + H2O = GDP + phosphate + H(+). Its function is as follows. Involved in targeting and insertion of nascent membrane proteins into the cytoplasmic membrane. Binds to the hydrophobic signal sequence of the ribosome-nascent chain (RNC) as it emerges from the ribosomes. The SRP-RNC complex is then targeted to the cytoplasmic membrane where it interacts with the SRP receptor FtsY. Interaction with FtsY leads to the transfer of the RNC complex to the Sec translocase for insertion into the membrane, the hydrolysis of GTP by both Ffh and FtsY, and the dissociation of the SRP-FtsY complex into the individual components. This Rickettsia prowazekii (strain Madrid E) protein is Signal recognition particle protein.